The chain runs to 138 residues: Holo-[acyl-carrier-protein] synthase (138 aa).

Residues Asp-8 and Glu-54 each coordinate Mg(2+).

It belongs to the P-Pant transferase superfamily. AcpS family. It depends on Mg(2+) as a cofactor.

The protein resides in the cytoplasm. It carries out the reaction apo-[ACP] + CoA = holo-[ACP] + adenosine 3',5'-bisphosphate + H(+). Transfers the 4'-phosphopantetheine moiety from coenzyme A to a Ser of acyl-carrier-protein. This is Holo-[acyl-carrier-protein] synthase from Roseiflexus sp. (strain RS-1).